We begin with the raw amino-acid sequence, 478 residues long: Dihydrolipoyl dehydrogenase (478 aa).

FAD contacts are provided by residues 34–49, K58, and G122; that span reads EKYI…GGTC. An intrachain disulfide couples C49 to C54. Residues 188-192, E211, V245, and 276-279 contribute to the NAD(+) site; these read GAGVI and AVGR. The FAD site is built by D319 and A327. H451 (proton acceptor) is an active-site residue.

It belongs to the class-I pyridine nucleotide-disulfide oxidoreductase family. As to quaternary structure, homodimer. FAD is required as a cofactor.

The protein localises to the cytoplasm. It carries out the reaction N(6)-[(R)-dihydrolipoyl]-L-lysyl-[protein] + NAD(+) = N(6)-[(R)-lipoyl]-L-lysyl-[protein] + NADH + H(+). Functionally, the branched-chain alpha-keto dehydrogenase complex catalyzes the overall conversion of alpha-keto acids to acyl-CoA and CO(2). It contains multiple copies of 3 enzymatic components: branched-chain alpha-keto acid decarboxylase (E1), lipoamide acyltransferase (E2) and lipoamide dehydrogenase (E3). Also acts in the glycine cleavage system. The protein is Dihydrolipoyl dehydrogenase (lpdG) of Pseudomonas aeruginosa (strain ATCC 15692 / DSM 22644 / CIP 104116 / JCM 14847 / LMG 12228 / 1C / PRS 101 / PAO1).